The chain runs to 179 residues: GTP-dependent dephospho-CoA kinase (179 aa).

Residues D50, V51, V52, D69, K71, and E126 each contribute to the GTP site.

Belongs to the GTP-dependent DPCK family.

It carries out the reaction 3'-dephospho-CoA + GTP = GDP + CoA + H(+). It functions in the pathway cofactor biosynthesis; coenzyme A biosynthesis. Catalyzes the GTP-dependent phosphorylation of the 3'-hydroxyl group of dephosphocoenzyme A to form coenzyme A (CoA). The polypeptide is GTP-dependent dephospho-CoA kinase (Pyrococcus horikoshii (strain ATCC 700860 / DSM 12428 / JCM 9974 / NBRC 100139 / OT-3)).